A 318-amino-acid chain; its full sequence is Molybdenum cofactor insertion chaperone PaoD (318 aa).

As to quaternary structure, homodimer in solution. Interacts with MocA.

Chaperone required for the production of an active PaoABC aldehyde oxidoreductase. Stabilizes the PaoC subunit and is required for the insertion of the molybdenum cofactor into this subunit. Binds molybdenum cofactor. Binds the molybdopterin cytosine dinucleotide (MCD) form of the cofactor after its formation by the molybdenum cofactor cytidylyltransferase MocA. This chain is Molybdenum cofactor insertion chaperone PaoD, found in Escherichia coli (strain K12).